Reading from the N-terminus, the 196-residue chain is Imidazoleglycerol-phosphate dehydratase (196 aa).

This sequence belongs to the imidazoleglycerol-phosphate dehydratase family.

The protein resides in the cytoplasm. It catalyses the reaction D-erythro-1-(imidazol-4-yl)glycerol 3-phosphate = 3-(imidazol-4-yl)-2-oxopropyl phosphate + H2O. The protein operates within amino-acid biosynthesis; L-histidine biosynthesis; L-histidine from 5-phospho-alpha-D-ribose 1-diphosphate: step 6/9. The sequence is that of Imidazoleglycerol-phosphate dehydratase from Granulibacter bethesdensis (strain ATCC BAA-1260 / CGDNIH1).